Consider the following 379-residue polypeptide: Putative zinc metalloprotease sll0528 (379 aa).

A run of 2 helical transmembrane segments spans residues L20–L40 and G54–A74. H75 is a binding site for Zn(2+). The active site involves E76. H79 provides a ligand contact to Zn(2+). The next 3 helical transmembrane spans lie at F115 to V135, I148 to L168, and G212 to L232. 2 CBS domains span residues V257–Q315 and M322–A379.

This sequence belongs to the peptidase M50B family. Requires Zn(2+) as cofactor.

It is found in the cell membrane. In Synechocystis sp. (strain ATCC 27184 / PCC 6803 / Kazusa), this protein is Putative zinc metalloprotease sll0528.